Reading from the N-terminus, the 306-residue chain is UDP-N-acetylenolpyruvoylglucosamine reductase (306 aa).

One can recognise an FAD-binding PCMH-type domain in the interval Lys28 to Gly193. Residue Arg172 is part of the active site. The active-site Proton donor is Ser222. Glu292 is an active-site residue.

Belongs to the MurB family. FAD serves as cofactor.

It localises to the cytoplasm. The catalysed reaction is UDP-N-acetyl-alpha-D-muramate + NADP(+) = UDP-N-acetyl-3-O-(1-carboxyvinyl)-alpha-D-glucosamine + NADPH + H(+). The protein operates within cell wall biogenesis; peptidoglycan biosynthesis. Its function is as follows. Cell wall formation. This is UDP-N-acetylenolpyruvoylglucosamine reductase from Streptococcus mutans serotype c (strain ATCC 700610 / UA159).